A 389-amino-acid polypeptide reads, in one-letter code: MKINYPLLALAIGAFGIGTTEFSPMGLLPVIARGVDVSIPAAGMLISAYAVGVMVGAPLMTLLLSHRARRSALIFLMAIFTLGNVLSAIAPDYMTLMLSRILTSLNHGAFFGLGSVVAASVVPKHKQASAVATMFMGLTLANIGGVPAATWLGETIGWRMSFLATAGLGVISMVSLFFSLPKGGAGARPEVKKELAVLMRPQVLSALLTTVLGAGAMFTLYTYISPVLQSITHATPVFVTAMLVLIGVGFSIGNYLGGKLADRSVNGTLKGFLLLLMVIMLAIPFLARNKFGAAISMAVWGAATFAVVPPLQMRVMRVASEAPGLSSSVNIGAFNLGNALGAAAGGAVISAGLGYSFVPVMGAIVAGLALLLVFMSARKQPETVCVANS.

Over 1-6 the chain is Cytoplasmic; sequence MKINYP. A helical transmembrane segment spans residues 7 to 27; sequence LLALAIGAFGIGTTEFSPMGL. At 28-43 the chain is on the periplasmic side; that stretch reads LPVIARGVDVSIPAAG. Residues 44–64 form a helical membrane-spanning segment; the sequence is MLISAYAVGVMVGAPLMTLLL. At 65–70 the chain is on the cytoplasmic side; sequence SHRARR. A helical membrane pass occupies residues 71–91; it reads SALIFLMAIFTLGNVLSAIAP. Topologically, residues 92-100 are periplasmic; sequence DYMTLMLSR. Residues 101-121 traverse the membrane as a helical segment; it reads ILTSLNHGAFFGLGSVVAASV. Topologically, residues 122-130 are cytoplasmic; it reads VPKHKQASA. A helical transmembrane segment spans residues 131–151; the sequence is VATMFMGLTLANIGGVPAATW. At 152 to 159 the chain is on the periplasmic side; that stretch reads LGETIGWR. A helical transmembrane segment spans residues 160-180; the sequence is MSFLATAGLGVISMVSLFFSL. The Cytoplasmic segment spans residues 181–203; it reads PKGGAGARPEVKKELAVLMRPQV. Residues 204–224 traverse the membrane as a helical segment; the sequence is LSALLTTVLGAGAMFTLYTYI. Residues 225–236 lie on the Periplasmic side of the membrane; sequence SPVLQSITHATP. Residues 237–257 form a helical membrane-spanning segment; it reads VFVTAMLVLIGVGFSIGNYLG. Over 258–266 the chain is Cytoplasmic; sequence GKLADRSVN. A helical membrane pass occupies residues 267 to 287; that stretch reads GTLKGFLLLLMVIMLAIPFLA. The Periplasmic segment spans residues 288–290; sequence RNK. A helical transmembrane segment spans residues 291 to 311; sequence FGAAISMAVWGAATFAVVPPL. Over 312-330 the chain is Cytoplasmic; the sequence is QMRVMRVASEAPGLSSSVN. Residues 331–351 traverse the membrane as a helical segment; that stretch reads IGAFNLGNALGAAAGGAVISA. At 352–356 the chain is on the periplasmic side; that stretch reads GLGYS. Residues 357 to 377 form a helical membrane-spanning segment; sequence FVPVMGAIVAGLALLLVFMSA. At 378–389 the chain is on the cytoplasmic side; that stretch reads RKQPETVCVANS.

This sequence belongs to the major facilitator superfamily.

The protein localises to the cell inner membrane. The protein is Inner membrane transport protein YdhP (ydhP) of Escherichia coli O157:H7.